Consider the following 906-residue polypeptide: MSHHKKRVYPQAQFQYGAGVPPAGIPVSDASIIPPQVQSPQVGATDNMIPPYNQTPTMNQMEQAPQAQMFTPAQQQLNQQINSVTTNMGAMNIGTPMMEQMPQQMTPQPQMYGQSQGLMGHSNKPMNQLYPVDLLTELPPPIHDLMLPPPPLMVSPDKMLVPSETANASSDYLRCTLNAMPKNGSLLKKSKLPLALVIRPYQHLHDEVNPPPLNEDGLVVRCRRCRSYMNPFVTFIEQGRRWRCNFCRLANDVPMQLDQSFEGAPANRYERNEIKHSVMEYLAPKEYTVRQPPPSTYIFVLDVSQNAVKNGLLATTARSILDTLEFLPNHDNRTRVSILAVDNSLHYFSIPLDEESDQIRMMDISDIDEPFLPKPHSMIVPLNECRNNLEKLLTQLPEIFQFNIMSKFALGPALKAAQNMISNLGGKIVVVSATLPNIGIGKLQRRNESGVANTPKESTQLLSCQDAFYKNFTITCSKSQVSVDLFLASEDYMDVASLSNLGRFTGGQTHFYPGFTAANIADVTKFTKEFSKFLSMDLSTETVMRARGSTGIRMSAFYGHFFNRSSDLCAFSTMPRDQSYVFEMSIDENIGTEYCYVQIAVLLSLNTSQRRIRIITVAIPTTESLSEVYASADQLAIADFFTKKAVEKAMNSSLQDARDLLNKSLQDILATYKKEIVVSNTAGGAPLRFCANLRMLPLLVHALSKHTAFRAGIVPSDHRAAALNNLESMPLKYLVKSAYARVYSLHDMVDEAGYPDENGEIVLPEPINASASLFERYGLYLIDNSSELFLWVGGDAVPELVNDVFGLQDIFQIPNGKHELAIVEGSEFNERVRNIIQKVREHDDVITYQTLYIVRGPSVSEPVGHAAGRELQPLRMWATSNLVEDKVLGTESYREFLQTLKNKLNK.

Residues Cys222, Cys225, Cys244, and Cys247 each contribute to the Zn(2+) site. Residues 222-247 (CRRCRSYMNPFVTFIEQGRRWRCNFC) are zinc finger-like.

The protein belongs to the SEC23/SEC24 family. SEC24 subfamily. As to quaternary structure, the COPII coat is composed of at least 5 proteins: the SEC23/24 complex, the SEC13/31 complex, and the protein SAR1. Golgi apparatus membrane; Peripheral membrane protein; Cytoplasmic side.

The protein resides in the cytoplasm. It is found in the cytoplasmic vesicle. The protein localises to the COPII-coated vesicle membrane. It localises to the endoplasmic reticulum membrane. Its subcellular location is the golgi apparatus membrane. Functionally, component of the coat protein complex II (COPII) which promotes the formation of transport vesicles from the endoplasmic reticulum (ER). The coat has two main functions, the physical deformation of the endoplasmic reticulum membrane into vesicles and the selection of cargo molecules. In Candida glabrata (strain ATCC 2001 / BCRC 20586 / JCM 3761 / NBRC 0622 / NRRL Y-65 / CBS 138) (Yeast), this protein is Protein transport protein SEC24-2 (SEC242).